The chain runs to 319 residues: Triplex capsid protein 2 (319 aa).

The protein belongs to the herpesviridae TRX2 protein family. In terms of assembly, interacts with TRX1 and major capisd protein/MCP.

Its subcellular location is the virion. The protein localises to the host nucleus. Its function is as follows. Structural component of the T=16 icosahedral capsid. The capsid is composed of pentamers and hexamers of major capsid protein/MCP, which are linked together by heterotrimers called triplexes. These triplexes are formed by a single molecule of triplex protein 1/TRX1 and two copies of triplex protein 2/TRX2. Additionally, TRX1 is required for efficient transport of TRX2 to the nucleus, which is the site of capsid assembly. In Gallid herpesvirus 2 (strain Chicken/Md5/ATCC VR-987) (GaHV-2), this protein is Triplex capsid protein 2.